We begin with the raw amino-acid sequence, 1171 residues long: Phytochrome B (1171 aa).

Low complexity predominate over residues 1-19; that stretch reads MASGSRATPTRSPSSARPA. Residues 1 to 53 are disordered; it reads MASGSRATPTRSPSSARPAAPRHQHHHSQSSGGSTSRAGGGGGGGGGGGGGAA. Residues 38–52 show a composition bias toward gly residues; sequence AGGGGGGGGGGGGGA. The 184-residue stretch at 259–442 folds into the GAF domain; the sequence is DVKLLCDTVV…AFGLQLNMEL (184 aa). Residue Cys364 participates in phytochromobilin binding. 2 consecutive PAS domains span residues 661–732 and 795–866; these read VARE…LRGD and DYKA…MIVL. The Histidine kinase domain occupies 943–1161; the sequence is YIYQEIKNPL…FFHIVLELPQ (219 aa).

This sequence belongs to the phytochrome family. Homodimer. Contains one covalently linked phytochromobilin chromophore.

Its function is as follows. Regulatory photoreceptor which exists in two forms that are reversibly interconvertible by light: the Pr form that absorbs maximally in the red region of the spectrum and the Pfr form that absorbs maximally in the far-red region. Photoconversion of Pr to Pfr induces an array of morphogenic responses, whereas reconversion of Pfr to Pr cancels the induction of those responses. Pfr controls the expression of a number of nuclear genes including those encoding the small subunit of ribulose-bisphosphate carboxylase, chlorophyll A/B binding protein, protochlorophyllide reductase, rRNA, etc. It also controls the expression of its own gene(s) in a negative feedback fashion. The chain is Phytochrome B (PHYB) from Oryza sativa subsp. japonica (Rice).